Consider the following 430-residue polypeptide: Tol-Pal system protein TolB (430 aa).

Residues 1-21 (MKQAFRVALGFLILWASVLHA) form the signal peptide.

The protein belongs to the TolB family. In terms of assembly, the Tol-Pal system is composed of five core proteins: the inner membrane proteins TolA, TolQ and TolR, the periplasmic protein TolB and the outer membrane protein Pal. They form a network linking the inner and outer membranes and the peptidoglycan layer.

It is found in the periplasm. In terms of biological role, part of the Tol-Pal system, which plays a role in outer membrane invagination during cell division and is important for maintaining outer membrane integrity. TolB occupies a key intermediary position in the Tol-Pal system because it communicates directly with both membrane-embedded components, Pal in the outer membrane and TolA in the inner membrane. The protein is Tol-Pal system protein TolB of Serratia proteamaculans (strain 568).